A 313-amino-acid chain; its full sequence is Acetyl-coenzyme A carboxylase carboxyl transferase subunit beta, chloroplastic (313 aa).

The CoA carboxyltransferase N-terminal domain maps to 47 to 313 (LWTRCDNCEN…SAPCRRSNNS (267 aa)). Residues cysteine 51, cysteine 54, cysteine 70, and cysteine 73 each contribute to the Zn(2+) site. The C4-type zinc finger occupies 51-73 (CDNCENMLYIRFLRQNKRICEEC).

Belongs to the AccD/PCCB family. Acetyl-CoA carboxylase is a heterohexamer composed of biotin carboxyl carrier protein, biotin carboxylase and 2 subunits each of ACCase subunit alpha and ACCase plastid-coded subunit beta (accD). Requires Zn(2+) as cofactor.

Its subcellular location is the plastid. The protein resides in the chloroplast stroma. The enzyme catalyses N(6)-carboxybiotinyl-L-lysyl-[protein] + acetyl-CoA = N(6)-biotinyl-L-lysyl-[protein] + malonyl-CoA. The protein operates within lipid metabolism; malonyl-CoA biosynthesis; malonyl-CoA from acetyl-CoA: step 1/1. Functionally, component of the acetyl coenzyme A carboxylase (ACC) complex. Biotin carboxylase (BC) catalyzes the carboxylation of biotin on its carrier protein (BCCP) and then the CO(2) group is transferred by the transcarboxylase to acetyl-CoA to form malonyl-CoA. The polypeptide is Acetyl-coenzyme A carboxylase carboxyl transferase subunit beta, chloroplastic (Anthoceros angustus (Hornwort)).